The sequence spans 553 residues: Methyl-coenzyme M reductase subunit alpha (553 aa).

Residue Q151 participates in coenzyme F430 binding. Coenzyme B contacts are provided by residues R229, K260 to H261, and R274. Coenzyme M-binding residues include Y336 and Y447.

Belongs to the methyl-coenzyme M reductase alpha subunit family. In terms of assembly, MCR is a hexamer of two alpha, two beta, and two gamma chains, forming a dimer of heterotrimers. Coenzyme F430 is required as a cofactor.

It localises to the cytoplasm. The enzyme catalyses coenzyme B + methyl-coenzyme M = methane + coenzyme M-coenzyme B heterodisulfide. Its pathway is one-carbon metabolism; methyl-coenzyme M reduction; methane from methyl-coenzyme M: step 1/1. Component of the methyl-coenzyme M reductase (MCR) I that catalyzes the reductive cleavage of methyl-coenzyme M (CoM-S-CH3 or 2-(methylthio)ethanesulfonate) using coenzyme B (CoB or 7-mercaptoheptanoylthreonine phosphate) as reductant which results in the production of methane and the mixed heterodisulfide of CoB and CoM (CoM-S-S-CoB). This is the final step in methanogenesis. The chain is Methyl-coenzyme M reductase subunit alpha (mcrA) from Methanococcus vannielii.